The following is a 199-amino-acid chain: FMN-dependent NADH:quinone oxidoreductase (199 aa).

Residues Ser17 to Ser19 and Met87 to Phe90 contribute to the FMN site.

The protein belongs to the azoreductase type 1 family. In terms of assembly, homodimer. FMN is required as a cofactor.

It carries out the reaction 2 a quinone + NADH + H(+) = 2 a 1,4-benzosemiquinone + NAD(+). The catalysed reaction is N,N-dimethyl-1,4-phenylenediamine + anthranilate + 2 NAD(+) = 2-(4-dimethylaminophenyl)diazenylbenzoate + 2 NADH + 2 H(+). Functionally, quinone reductase that provides resistance to thiol-specific stress caused by electrophilic quinones. Its function is as follows. Also exhibits azoreductase activity. Catalyzes the reductive cleavage of the azo bond in aromatic azo compounds to the corresponding amines. This is FMN-dependent NADH:quinone oxidoreductase from Mycoplasma mycoides subsp. mycoides SC (strain CCUG 32753 / NCTC 10114 / PG1).